Here is a 627-residue protein sequence, read N- to C-terminus: Sphingomyelin phosphodiesterase (627 aa).

The signal sequence occupies residues 1 to 44; the sequence is MPHHRASSGQDHLRAGWEQRLERSLPAPRVGLLWMGLGLALVLA. A Saposin B-type domain is found at 83–167; the sequence is QNLTCPACKV…LLGSSCGHWD (85 aa). N-linked (GlcNAc...) asparagine glycosylation occurs at N84. 3 cysteine pairs are disulfide-bonded: C87/C163, C90/C155, and C118/C129. The N-linked (GlcNAc...) asparagine glycan is linked to N173. Zn(2+) contacts are provided by D204 and H206. Disulfide bonds link C219–C224 and C225–C248. Residues D276 and N316 each coordinate Zn(2+). N-linked (GlcNAc...) asparagine glycans are attached at residues N333 and N393. C383 and C429 are oxidised to a cystine. Residues H423, H455, and H457 each coordinate Zn(2+). Phosphoserine is present on S506. N-linked (GlcNAc...) asparagine glycosylation occurs at N518. Cystine bridges form between C582-C586 and C592-C605. A glycan (N-linked (GlcNAc...) asparagine) is linked at N611.

It belongs to the acid sphingomyelinase family. In terms of assembly, monomer. Interacts with SORT1; the interaction is required for SMPD1 targeting to lysosomes. The cofactor is Zn(2+). Proteolytically processed. Mature lysosomal form arises from C-terminal proteolytic processing of pro-sphingomyelin phosphodiesterase. Post-translationally, both lysosomal and secreted forms are glycosylated but they show a differential pattern of glycosylation. In terms of processing, phosphorylated at Ser-506 by PRKCD upon stress stimuli. Phosphorylation is required for secretion. This form is generated following cleavage by CASP7 in the extracellular milieu. It shows increased activity.

It localises to the lysosome. The protein resides in the lipid droplet. Its subcellular location is the secreted. The protein localises to the extracellular space. It carries out the reaction a sphingomyelin + H2O = phosphocholine + an N-acylsphing-4-enine + H(+). The catalysed reaction is N-(octadecanoyl)-sphing-4-enine-1-phosphocholine + H2O = N-octadecanoylsphing-4-enine + phosphocholine + H(+). It catalyses the reaction a 1,2-diacyl-sn-glycero-3-phosphocholine + H2O = phosphocholine + a 1,2-diacyl-sn-glycerol + H(+). The enzyme catalyses 1,2-dihexadecanoyl-sn-glycero-3-phosphocholine + H2O = 1,2-dihexadecanoyl-sn-glycerol + phosphocholine + H(+). Hydrolysis of liposomal sphingomyelin is stimulated by incorporation of diacylglycerol (DAG), ceramide and free fatty acids into the liposomal membranes. Phosphatidylcholine hydrolysis is inhibited by incorporation of cholesterol, ceramide, DAG, monoacylglycerol and fatty acids. Converts sphingomyelin to ceramide. Exists as two enzymatic forms that arise from alternative trafficking of a single protein precursor, one that is targeted to the endolysosomal compartment, whereas the other is released extracellularly. However, in response to various forms of stress, lysosomal exocytosis may represent a major source of the secretory form. In terms of biological role, in the lysosomes, converts sphingomyelin to ceramide. Plays an important role in the export of cholesterol from the intraendolysosomal membranes. Also has phospholipase C activities toward 1,2-diacylglycerolphosphocholine and 1,2-diacylglycerolphosphoglycerol. Modulates stress-induced apoptosis through the production of ceramide. Functionally, when secreted, modulates cell signaling with its ability to reorganize the plasma membrane by converting sphingomyelin to ceramide. Secreted form is increased in response to stress and inflammatory mediators such as IL1B, IFNG or TNF as well as upon infection with bacteria and viruses. Produces the release of ceramide in the outer leaflet of the plasma membrane playing a central role in host defense. Ceramide reorganizes these rafts into larger signaling platforms that are required to internalize P.aeruginosa, induce apoptosis and regulate the cytokine response in infected cells. In wounded cells, the lysosomal form is released extracellularly in the presence of Ca(2+) and promotes endocytosis and plasma membrane repair. Its function is as follows. This form is generated following cleavage by CASP7 in the extracellular milieu in response to bacterial infection. It shows increased ability to convert sphingomyelin to ceramide and promotes plasma membrane repair. Plasma membrane repair by ceramide counteracts the action of gasdermin-D (GSDMD) perforin (PRF1) pores that are formed in response to bacterial infection. (Microbial infection) Secretion is activated by bacteria such as P.aeruginosa, this activation results in the release of ceramide in the outer leaflet of the plasma membrane which facilitates the infection. This chain is Sphingomyelin phosphodiesterase, found in Mus musculus (Mouse).